A 329-amino-acid chain; its full sequence is Transmembrane protein I329L (329 aa).

A signal peptide spans 1-31; the sequence is MLRVFIFFVFLGSGLTGRIKPQVTCKYFISE. N-linked (GlcNAc...) asparagine; by host glycosylation is found at Asn32, Asn39, Asn44, Asn76, Asn82, and Asn101. The Extracellular segment spans residues 32–239; sequence NNTWYKYNVT…NTERYKSCYP (208 aa). Residues 112–133 form an LRR repeat; the sequence is ELKFLDLRYNDLQVIDYNILRK. N-linked (GlcNAc...) asparagine; by host glycosylation is found at Asn185 and Asn219. Cys195 and Cys237 are joined by a disulfide. A helical membrane pass occupies residues 240 to 260; the sequence is LVFISILCSCISFLFLFICLL. Residues 261–329 are Cytoplasmic-facing; sequence RSICKKYSCT…EKKVSCSRRK (69 aa).

It belongs to the asfivirus I329L family. In terms of processing, highly glycosylated.

The protein localises to the host endoplasmic reticulum membrane. Its subcellular location is the host Golgi apparatus membrane. Functionally, viral TLR3 homolog that probably prevents TLR3 dimerization and subsequent induction of IFN. Inhibits dsRNA-stimulated activation of NF-kB and IRF3. In Ornithodoros (relapsing fever ticks), this protein is Transmembrane protein I329L.